We begin with the raw amino-acid sequence, 412 residues long: Angiopoietin-related protein 4 (412 aa).

The first 23 residues, 1–23, serve as a signal peptide directing secretion; the sequence is MRSAPTARAALVLCAATAGLLSA. Residues 106–153 adopt a coiled-coil conformation; the sequence is ETLHSLQTQLKAQNSKIQQLFQKVAQQQRHLEKQHLRIQNLQGQLDHL. Asn-183 carries N-linked (GlcNAc...) asparagine glycosylation. Residues 185–407 enclose the Fibrinogen C-terminal domain; it reads SRLHRLPRDC…ATTMLIQPTV (223 aa). 2 disulfide bridges follow: Cys-194/Cys-222 and Cys-347/Cys-360.

In terms of assembly, homooligomer; disulfide-linked via Cys residues in the N-terminal part of the protein. The homooligomer undergoes proteolytic processing to release the ANGPTL4 C-terminal chain, which circulates as a monomer. The homooligomer unprocessed form is able to interact with the extracellular matrix. Post-translationally, N-glycosylated. In terms of processing, forms disulfide-linked dimers and tetramers. Cleaved into a smaller N-terminal chain and a larger chain that contains the fibrinogen C-terminal domain; both cleaved and uncleaved forms are detected in the extracellular space. The cleaved form is not present within the cell.

The protein resides in the secreted. It is found in the extracellular space. Its subcellular location is the extracellular matrix. Mediates inactivation of the lipoprotein lipase LPL, and thereby plays a role in the regulation of triglyceride clearance from the blood serum and in lipid metabolism. May also play a role in regulating glucose homeostasis and insulin sensitivity. Inhibits proliferation, migration, and tubule formation of endothelial cells and reduces vascular leakage. Upon heterologous expression, inhibits the adhesion of endothelial cell to the extracellular matrix (ECM), and inhibits the reorganization of the actin cytoskeleton, formation of actin stress fibers and focal adhesions in endothelial cells that have adhered to ANGPTL4-containing ECM (in vitro). Depending on context, may modulate tumor-related angiogenesis. Its function is as follows. Mediates inactivation of the lipoprotein lipase LPL, and thereby plays an important role in the regulation of triglyceride clearance from the blood serum and in lipid metabolism. Has higher activity in LPL inactivation than the uncleaved protein. The protein is Angiopoietin-related protein 4 (ANGPTL4) of Sus scrofa (Pig).